The primary structure comprises 175 residues: Zinc finger A20 and AN1 domain-containing stress-associated protein 7 (175 aa).

The segment at 13-47 (PTEPKLCDNGCGFFGSPSNMNLCSKCYRSLRAEED) adopts an A20-type zinc-finger fold. Zn(2+) contacts are provided by C19, C23, C35, C38, C116, C119, C130, C132, C137, H140, H146, and C148. The AN1-type zinc-finger motif lies at 110–156 (VRPNNRCFSCNKKVGVMGFKCKCGSTFCGSHRYPEKHECSFDFKEVG).

May be involved in environmental stress response. The sequence is that of Zinc finger A20 and AN1 domain-containing stress-associated protein 7 (SAP7) from Arabidopsis thaliana (Mouse-ear cress).